Here is a 231-residue protein sequence, read N- to C-terminus: Probable transglycosylase SceD (231 aa).

An N-terminal signal peptide occupies residues 1–27 (MKKTLLASSLAVGLGIVAGNAGHEAHA). Polar residues predominate over residues 106–116 (AVQANQVQSQE). Positions 106 to 153 (AVQANQVQSQEVEAPQNAQTQQPQASTSNNSQVTATPTESKSSEGSSV) are disordered. The segment covering 119-137 (APQNAQTQQPQASTSNNSQ) has biased composition (low complexity). Residues 138-153 (VTATPTESKSSEGSSV) are compositionally biased toward polar residues.

Belongs to the transglycosylase family. SceD subfamily.

Its subcellular location is the secreted. In terms of biological role, is able to cleave peptidoglycan and affects clumping and separation of bacterial cells. This is Probable transglycosylase SceD (sceD) from Staphylococcus aureus (strain USA300).